Reading from the N-terminus, the 142-residue chain is Ribosome-binding factor A (142 aa).

The interval 119–142 is disordered; it reads ETLGEVQSESDQPTTDETTTVNKT. The segment covering 123–142 has biased composition (polar residues); the sequence is EVQSESDQPTTDETTTVNKT.

Belongs to the RbfA family. As to quaternary structure, monomer. Binds 30S ribosomal subunits, but not 50S ribosomal subunits or 70S ribosomes.

It is found in the cytoplasm. Its function is as follows. One of several proteins that assist in the late maturation steps of the functional core of the 30S ribosomal subunit. Associates with free 30S ribosomal subunits (but not with 30S subunits that are part of 70S ribosomes or polysomes). Required for efficient processing of 16S rRNA. May interact with the 5'-terminal helix region of 16S rRNA. This chain is Ribosome-binding factor A, found in Prochlorococcus marinus (strain MIT 9303).